The sequence spans 566 residues: Protein OBERON 1 (566 aa).

Polar residues predominate over residues 1–10 (MGTSSGSNLP). The disordered stretch occupies residues 1–79 (MGTSSGSNLP…KTGPDSHDQH (79 aa)). The span at 18 to 29 (QQLQTSLSLVSS) shows a compositional bias: low complexity. A compositionally biased stretch (polar residues) spans 47–60 (ESASSQETWPTSKS). A compositionally biased stretch (basic and acidic residues) spans 64-79 (RKTDSGKTGPDSHDQH). A PHD-type zinc finger spans residues 225 to 289 (LCMCVICNKF…LFKCRACNHT (65 aa)). A coiled-coil region spans residues 407–522 (EEKTRMYKKA…LFEKIKEQES (116 aa)). Positions 545 to 566 (YNASSPRVDPRSNQRNPFRSNP) are disordered. Residues 555–566 (RSNQRNPFRSNP) are compositionally biased toward polar residues.

Self-interacts. Interacts with OBE2, OBE3 and OBE4. Binds to VPg of pea seed borne mosaic virus (PSbMV), turnip mosaic virus (TuMV) and lettuce mosaic virus (LMV), but not with VPg of tobacco etch virus (TEV), cowpea mosaic virus (CPMV), tomato black ring virus (TBRV) and grapevine fan leaf virus (GFLV). Interacts with RBL. As to expression, expressed in roots, seedlings, stems, leaves, flowers and siliques, especially in the vasculature.

It is found in the nucleus. The protein localises to the nucleoplasm. In terms of biological role, probable transcription factor that acts together with OBE2 for the maintenance and/or establishment of both the shoot and root meristems, probably by controlling the expression of the meristem genes such as WUS, PLT1 and PLT2 and of genes required for auxin responses. Promotes cell meristematic activity via the WUSCHEL-CLAVATA pathway. Involved in the development of the basal pole and in auxin-mediated root and vascular development in the embryo. Confers sensitivity to turnip mosaic virus (TuMV) probably by promoting viral movement and multiplication via interaction with TuMV VPg. In Arabidopsis thaliana (Mouse-ear cress), this protein is Protein OBERON 1.